Reading from the N-terminus, the 244-residue chain is 5-oxoprolinase subunit A (244 aa).

It belongs to the LamB/PxpA family. Forms a complex composed of PxpA, PxpB and PxpC.

The catalysed reaction is 5-oxo-L-proline + ATP + 2 H2O = L-glutamate + ADP + phosphate + H(+). In terms of biological role, catalyzes the cleavage of 5-oxoproline to form L-glutamate coupled to the hydrolysis of ATP to ADP and inorganic phosphate. The polypeptide is 5-oxoprolinase subunit A (Shigella flexneri serotype 5b (strain 8401)).